The chain runs to 204 residues: Molybdenum cofactor guanylyltransferase (204 aa).

GTP-binding positions include 12 to 14 (LAG), Lys25, Asn53, Asp71, and Asp101. Residue Asp101 coordinates Mg(2+).

It belongs to the MobA family. In terms of assembly, monomer. The cofactor is Mg(2+).

The protein localises to the cytoplasm. It carries out the reaction Mo-molybdopterin + GTP + H(+) = Mo-molybdopterin guanine dinucleotide + diphosphate. Functionally, transfers a GMP moiety from GTP to Mo-molybdopterin (Mo-MPT) cofactor (Moco or molybdenum cofactor) to form Mo-molybdopterin guanine dinucleotide (Mo-MGD) cofactor. This Ralstonia nicotianae (strain ATCC BAA-1114 / GMI1000) (Ralstonia solanacearum) protein is Molybdenum cofactor guanylyltransferase.